Reading from the N-terminus, the 467-residue chain is Putative serine/threonine-protein kinase R400 (467 aa).

In terms of domain architecture, Protein kinase spans 99–467; that stretch reads GVKLIYIKSG…STGQKPTKKV (369 aa). Residues 105-113 and lysine 129 contribute to the ATP site; that span reads IKSGTTGHT. Aspartate 272 functions as the Proton acceptor in the catalytic mechanism. Residues 443-467 are disordered; the sequence is LFQQGNGSKQPVPKKSTGQKPTKKV. Residues 458–467 are compositionally biased toward polar residues; that stretch reads STGQKPTKKV.

Belongs to the protein kinase superfamily. Ser/Thr protein kinase family.

The protein resides in the virion. It catalyses the reaction L-seryl-[protein] + ATP = O-phospho-L-seryl-[protein] + ADP + H(+). The catalysed reaction is L-threonyl-[protein] + ATP = O-phospho-L-threonyl-[protein] + ADP + H(+). This is Putative serine/threonine-protein kinase R400 from Acanthamoeba polyphaga mimivirus (APMV).